Consider the following 301-residue polypeptide: Cilia- and flagella-associated protein 161 (301 aa).

The protein resides in the cytoplasm. Its subcellular location is the cytoskeleton. The protein localises to the cilium axoneme. Its function is as follows. Microtubule inner protein (MIP) part of the dynein-decorated doublet microtubules (DMTs) in cilia axoneme, which is required for motile cilia beating. The polypeptide is Cilia- and flagella-associated protein 161 (Danio rerio (Zebrafish)).